We begin with the raw amino-acid sequence, 287 residues long: Myoblast determination protein 1 homolog B (287 aa).

The region spanning 96-147 is the bHLH domain; it reads DRRRAATMRERRRLSKVNDAFETLKRCTSTNPNQRLPKVDILRNAISYIDSL. 2 disordered regions span residues 161–202 and 231–277; these read NMEH…FYTD and QSPS…QLSH. Residues 168–188 show a composition bias toward low complexity; that stretch reads DSDASSPSSNCSDGMNSPPCS. The span at 267 to 277 shows a compositional bias: polar residues; it reads SPGNSCTQLSH.

Efficient DNA binding requires dimerization with another bHLH protein.

The protein resides in the nucleus. May act as a transcriptional activator that promotes transcription of muscle-specific target genes and plays a role in muscle differentiation. In Xenopus laevis (African clawed frog), this protein is Myoblast determination protein 1 homolog B (myod1-b).